Reading from the N-terminus, the 455-residue chain is Bifunctional protein GlmU (455 aa).

The interval 1–232 (MASTTGALIL…DPNLLGVNNP (232 aa)) is pyrophosphorylase. UDP-N-acetyl-alpha-D-glucosamine is bound by residues 10 to 13 (LAAG), Lys24, Gln75, and 80 to 81 (GT). Asp106 contributes to the Mg(2+) binding site. Residues Gly141, Glu155, Asn172, and Asn230 each coordinate UDP-N-acetyl-alpha-D-glucosamine. Asn230 is a Mg(2+) binding site. Residues 233 to 253 (AELIRSEALLRTRLVIGHIEG) form a linker region. Residues 254–455 (GVLIHAPETV…QTNLPRKPKA (202 aa)) form an N-acetyltransferase region. Arg336 and Lys354 together coordinate UDP-N-acetyl-alpha-D-glucosamine. His366 acts as the Proton acceptor in catalysis. 2 residues coordinate UDP-N-acetyl-alpha-D-glucosamine: Tyr369 and Asn380. Acetyl-CoA-binding positions include Ala383, 389–390 (NY), Ser408, Ala426, and Arg443.

This sequence in the N-terminal section; belongs to the N-acetylglucosamine-1-phosphate uridyltransferase family. The protein in the C-terminal section; belongs to the transferase hexapeptide repeat family. Homotrimer. Mg(2+) serves as cofactor.

The protein localises to the cytoplasm. The enzyme catalyses alpha-D-glucosamine 1-phosphate + acetyl-CoA = N-acetyl-alpha-D-glucosamine 1-phosphate + CoA + H(+). It carries out the reaction N-acetyl-alpha-D-glucosamine 1-phosphate + UTP + H(+) = UDP-N-acetyl-alpha-D-glucosamine + diphosphate. The protein operates within nucleotide-sugar biosynthesis; UDP-N-acetyl-alpha-D-glucosamine biosynthesis; N-acetyl-alpha-D-glucosamine 1-phosphate from alpha-D-glucosamine 6-phosphate (route II): step 2/2. It participates in nucleotide-sugar biosynthesis; UDP-N-acetyl-alpha-D-glucosamine biosynthesis; UDP-N-acetyl-alpha-D-glucosamine from N-acetyl-alpha-D-glucosamine 1-phosphate: step 1/1. Its pathway is bacterial outer membrane biogenesis; LPS lipid A biosynthesis. In terms of biological role, catalyzes the last two sequential reactions in the de novo biosynthetic pathway for UDP-N-acetylglucosamine (UDP-GlcNAc). The C-terminal domain catalyzes the transfer of acetyl group from acetyl coenzyme A to glucosamine-1-phosphate (GlcN-1-P) to produce N-acetylglucosamine-1-phosphate (GlcNAc-1-P), which is converted into UDP-GlcNAc by the transfer of uridine 5-monophosphate (from uridine 5-triphosphate), a reaction catalyzed by the N-terminal domain. In Nitratidesulfovibrio vulgaris (strain DP4) (Desulfovibrio vulgaris), this protein is Bifunctional protein GlmU.